The chain runs to 384 residues: Signal peptide peptidase-like 3 (384 aa).

At 1 to 8 the chain is on the lumenal side; the sequence is MAEQTYSW. A helical membrane pass occupies residues 9-29; it reads AYSLVDSSQVSTFLISILLIV. Topologically, residues 30–73 are cytoplasmic; sequence YGSFRSLNMDFENQDKEKDSNSSSGSFNGNSTNNSIQTIDSTQA. A helical transmembrane segment spans residues 74-94; sequence LFLPIGASVSLLVMFFFFDSV. Residue Gln-95 is a topological domain, lumenal. The helical transmembrane segment at 96–116 threads the bilayer; sequence VVFTICTAVLATIAFAFLLLP. At 117 to 138 the chain is on the cytoplasmic side; sequence MCQYLTRPCSPQNKISFGCCGR. The chain crosses the membrane as a helical span at residues 139–159; it reads FTAAELLSFSLSVMLVLIWVL. Residues 160–164 are Lumenal-facing; sequence TGHWL. The helical transmembrane segment at 165-185 threads the bilayer; it reads LMDALAMGLCVAMIAFVRLPS. At 186–190 the chain is on the cytoplasmic side; it reads LKVSC. The helical transmembrane segment at 191–211 threads the bilayer; sequence LLLSGLLIYDVFWVFFSAYIF. Asp-200 is an active-site residue. At 212–262 the chain is on the lumenal side; that stretch reads NSNVMVKVATQPADNPLDVLSRKLHLGPNVGRDVPRLSLPGKLVFPSSTGS. A helical membrane pass occupies residues 263–283; the sequence is HFSMLGIGDIVMPGLLLCFVL. Asp-271 is an active-site residue. At 284 to 311 the chain is on the cytoplasmic side; it reads RYDNYKKQASGDSCGAPGPANISGRMQK. The chain crosses the membrane as a helical span at residues 312–332; the sequence is VSYFHCTLIGYFVGLLTATVA. At 333–339 the chain is on the lumenal side; that stretch reads SRIHRAA. A helical transmembrane segment spans residues 340–360; the sequence is QPALLYLVPFTLLPLLTMAYL. Positions 341 to 343 match the PAL motif; it reads PAL. Residues 361 to 384 lie on the Cytoplasmic side of the membrane; it reads KGDLRRMWSEPFHSKSSSSRFLEV.

It belongs to the peptidase A22B family. In terms of assembly, monomer. Homodimer. Interacts with STIM1 (via transmembrane region and SOAR/CAD domain); the interaction promotes the binding of STIM1 to ORAI1. Not glycosylated.

Its subcellular location is the endoplasmic reticulum membrane. It localises to the golgi apparatus. The protein resides in the membrane. Its proteolytic activity is blocked by a signal peptide peptidase (SPP) inhibitor, (ZLL)2-ketone (ZLL) or a gamma-secretase inhibitor, LY411,575. Intramembrane-cleaving aspartic protease (I-CLiP) that cleaves type II membrane protein substrates in or close to their luminal transmembrane domain boundaries. Acts like a sheddase by mediating the proteolytic release and secretion of active site-containing ectodomains of glycan-modifiying glycosidase and glycosyltransferase enzymes such as MGAT5, B4GAT1 and B4GALT1. Plays a role in the regulation of cellular glycosylation processes. Required to link T-cell antigen receptor (TCR) and calcineurin-NFAT signaling cascades in lymphocytes by promoting the association of STIM1 and ORAI1 during store-operated calcium entry (SOCE) in a protease-independent manner. The sequence is that of Signal peptide peptidase-like 3 from Mus musculus (Mouse).